The primary structure comprises 307 residues: MEAHKPVLFDEVMEGLAIRPDGIYVDGTFGRGGHSFGILQRLGPNGRLMAMDKDPDAVAVANKALFEDARFSIVHETFANLQKAVRDRGWEGKVNGILLDIGVSSPQLEDAKRGFSFSKDGPLDMRMNPKQSMDAASWINQAAMEDIRRVLWNYGEERFAKRIAQAIVNAREEKPITRTQELSDIVIKAYPQREIKKHPATRTFQAIRIFINRELDELRECLPQCLETLAVGGRLCVISFHSLEDRLVKRFIQKESRDHLPREIPILAKDIKHRLKPLGSLIRPTEAEIKKNPRARSARLRIVEKLS.

S-adenosyl-L-methionine is bound by residues 32-34, D52, F78, D100, and Q107; that span reads GGH.

This sequence belongs to the methyltransferase superfamily. RsmH family.

The protein localises to the cytoplasm. It carries out the reaction cytidine(1402) in 16S rRNA + S-adenosyl-L-methionine = N(4)-methylcytidine(1402) in 16S rRNA + S-adenosyl-L-homocysteine + H(+). In terms of biological role, specifically methylates the N4 position of cytidine in position 1402 (C1402) of 16S rRNA. In Coxiella burnetii (strain CbuK_Q154) (Coxiella burnetii (strain Q154)), this protein is Ribosomal RNA small subunit methyltransferase H.